The sequence spans 273 residues: tRNA pseudouridine synthase B (273 aa).

The Nucleophile role is filled by Asp-38.

Belongs to the pseudouridine synthase TruB family. Type 1 subfamily.

The enzyme catalyses uridine(55) in tRNA = pseudouridine(55) in tRNA. Functionally, responsible for synthesis of pseudouridine from uracil-55 in the psi GC loop of transfer RNAs. This Campylobacter concisus (strain 13826) protein is tRNA pseudouridine synthase B.